Consider the following 90-residue polypeptide: Acylphosphatase (90 aa).

The 88-residue stretch at 3–90 folds into the Acylphosphatase-like domain; it reads KKQFIVYGLV…REFTDFSVRY (88 aa). Active-site residues include R18 and N36.

The protein belongs to the acylphosphatase family.

It carries out the reaction an acyl phosphate + H2O = a carboxylate + phosphate + H(+). The protein is Acylphosphatase (acyP) of Pasteurella multocida (strain Pm70).